A 128-amino-acid polypeptide reads, in one-letter code: Large ribosomal subunit protein bL17 (128 aa).

Belongs to the bacterial ribosomal protein bL17 family. As to quaternary structure, part of the 50S ribosomal subunit. Contacts protein L32.

The sequence is that of Large ribosomal subunit protein bL17 from Pseudomonas entomophila (strain L48).